The sequence spans 501 residues: Aldehyde dehydrogenase 1A1 (501 aa).

Ser2 carries the post-translational modification N-acetylserine. N6-acetyllysine is present on residues Lys91 and Lys128. Residues 167–170, 193–196, 226–227, and 246–247 contribute to the NAD(+) site; these read IPWN, KPAE, GP, and GS. Lys252 carries the post-translational modification N6-acetyllysine. Glu269 functions as the Proton acceptor in the catalytic mechanism. 269–271 is a binding site for NAD(+); that stretch reads ELG. Cys303 functions as the Nucleophile in the catalytic mechanism. The mediates interaction with PRMT3 stretch occupies residues 336–501; it reads LTPGATQGPQ…VTVKISQKNS (166 aa). Thr337 bears the Phosphothreonine mark. NAD(+) is bound at residue 349-353; the sequence is EQYDK. Lys353 and Lys367 each carry N6-acetyllysine. 400–402 contributes to the NAD(+) binding site; that stretch reads EIF. Lys410 bears the N6-acetyllysine mark. Phosphoserine is present on Ser413. An N6-acetyllysine mark is found at Lys419 and Lys495.

This sequence belongs to the aldehyde dehydrogenase family. In terms of assembly, homotetramer. Interacts with PRMT3; the interaction is direct, inhibits ALDH1A1 aldehyde dehydrogenase activity and is independent of the methyltransferase activity of PRMT3. Post-translationally, the N-terminus is blocked most probably by acetylation.

Its subcellular location is the cytoplasm. The protein localises to the cytosol. It localises to the cell projection. The protein resides in the axon. The enzyme catalyses an aldehyde + NAD(+) + H2O = a carboxylate + NADH + 2 H(+). It carries out the reaction all-trans-retinal + NAD(+) + H2O = all-trans-retinoate + NADH + 2 H(+). It catalyses the reaction 9-cis-retinal + NAD(+) + H2O = 9-cis-retinoate + NADH + 2 H(+). The catalysed reaction is 11-cis-retinal + NAD(+) + H2O = 11-cis-retinoate + NADH + 2 H(+). The enzyme catalyses 13-cis-retinal + NAD(+) + H2O = 13-cis-retinoate + NADH + 2 H(+). It carries out the reaction 3-deoxyglucosone + NAD(+) + H2O = 2-dehydro-3-deoxy-D-gluconate + NADH + 2 H(+). It catalyses the reaction (E)-4-hydroxynon-2-enal + NAD(+) + H2O = (E)-4-hydroxynon-2-enoate + NADH + 2 H(+). The catalysed reaction is malonaldehyde + NAD(+) + H2O = 3-oxopropanoate + NADH + 2 H(+). The enzyme catalyses hexanal + NAD(+) + H2O = hexanoate + NADH + 2 H(+). It carries out the reaction propanal + NAD(+) + H2O = propanoate + NADH + 2 H(+). It catalyses the reaction acetaldehyde + NAD(+) + H2O = acetate + NADH + 2 H(+). The catalysed reaction is benzaldehyde + NAD(+) + H2O = benzoate + NADH + 2 H(+). The enzyme catalyses 4-aminobutanal + NAD(+) + H2O = 4-aminobutanoate + NADH + 2 H(+). Its pathway is cofactor metabolism; retinol metabolism. Its function is as follows. Cytosolic dehydrogenase that catalyzes the irreversible oxidation of a wide range of aldehydes to their corresponding carboxylic acid. Functions downstream of retinol dehydrogenases and catalyzes the oxidation of retinaldehyde into retinoic acid, the second step in the oxidation of retinol/vitamin A into retinoic acid. This pathway is crucial to control the levels of retinol and retinoic acid, two important molecules which excess can be teratogenic and cytotoxic. Also oxidizes aldehydes resulting from lipid peroxidation like (E)-4-hydroxynon-2-enal/HNE, malonaldehyde and hexanal that form protein adducts and are highly cytotoxic. By participating for instance to the clearance of (E)-4-hydroxynon-2-enal/HNE in the lens epithelium prevents the formation of HNE-protein adducts and lens opacification. Also functions downstream of fructosamine-3-kinase in the fructosamine degradation pathway by catalyzing the oxidation of 3-deoxyglucosone, the carbohydrate product of fructosamine 3-phosphate decomposition, which is itself a potent glycating agent that may react with lysine and arginine side-chains of proteins. Also has an aminobutyraldehyde dehydrogenase activity and is probably part of an alternative pathway for the biosynthesis of GABA/4-aminobutanoate in midbrain, thereby playing a role in GABAergic synaptic transmission. The chain is Aldehyde dehydrogenase 1A1 from Macaca fascicularis (Crab-eating macaque).